Here is a 131-residue protein sequence, read N- to C-terminus: Small ribosomal subunit protein uS8 (131 aa).

Belongs to the universal ribosomal protein uS8 family. As to quaternary structure, part of the 30S ribosomal subunit. Contacts proteins S5 and S12.

One of the primary rRNA binding proteins, it binds directly to 16S rRNA central domain where it helps coordinate assembly of the platform of the 30S subunit. The chain is Small ribosomal subunit protein uS8 from Sulfurimonas denitrificans (strain ATCC 33889 / DSM 1251) (Thiomicrospira denitrificans (strain ATCC 33889 / DSM 1251)).